We begin with the raw amino-acid sequence, 223 residues long: Adenylate kinase (223 aa).

Residue 17-22 coordinates ATP; that stretch reads GAGKGT. Residues 37–66 form an NMP region; the sequence is STGDMLRSQVAKGTPLGVEAKKIMDQGGLV. Residues Thr38, Arg43, 64 to 66, 93 to 96, and Gln100 each bind AMP; these read GLV and GFPR. An LID region spans residues 134–171; it reads GRLVHPSSGRSYHKLFNPPKVEMTDDVTGEPLVQRSDD. ATP-binding positions include Arg135 and 144–145; that span reads SY. Positions 168 and 179 each coordinate AMP. Gln207 is an ATP binding site.

The protein belongs to the adenylate kinase family. AK2 subfamily. As to quaternary structure, monomer.

The protein resides in the cytoplasm. Its subcellular location is the cytosol. The protein localises to the mitochondrion intermembrane space. The catalysed reaction is AMP + ATP = 2 ADP. Its function is as follows. Catalyzes the reversible transfer of the terminal phosphate group between ATP and AMP. Plays an important role in cellular energy homeostasis and in adenine nucleotide metabolism. Adenylate kinase activity is critical for regulation of the phosphate utilization and the AMP de novo biosynthesis pathways. The polypeptide is Adenylate kinase (Vanderwaltozyma polyspora (strain ATCC 22028 / DSM 70294 / BCRC 21397 / CBS 2163 / NBRC 10782 / NRRL Y-8283 / UCD 57-17) (Kluyveromyces polysporus)).